We begin with the raw amino-acid sequence, 491 residues long: Trehalose-6-phosphate synthase (491 aa).

Arg22 is a binding site for D-glucose 6-phosphate. 42–43 (GG) lines the UDP-alpha-D-glucose pocket. The D-glucose 6-phosphate site is built by Tyr100 and Asp154. Positions 296 and 301 each coordinate UDP-alpha-D-glucose. Arg334 lines the D-glucose 6-phosphate pocket. 399 to 403 (LVAKE) provides a ligand contact to UDP-alpha-D-glucose.

This sequence belongs to the glycosyltransferase 20 family. As to quaternary structure, homotetramer.

The catalysed reaction is ADP-alpha-D-glucose + D-glucose 6-phosphate = alpha,alpha-trehalose 6-phosphate + ADP + H(+). The enzyme catalyses CDP-alpha-D-glucose + D-glucose 6-phosphate = alpha,alpha-trehalose 6-phosphate + CDP + H(+). It catalyses the reaction GDP-alpha-D-glucose + D-glucose 6-phosphate = alpha,alpha-trehalose 6-phosphate + GDP + H(+). It carries out the reaction TDP-alpha-D-glucose + D-glucose 6-phosphate = 5-methyl-UDP + alpha,alpha-trehalose 6-phosphate + H(+). The catalysed reaction is D-glucose 6-phosphate + UDP-alpha-D-glucose = alpha,alpha-trehalose 6-phosphate + UDP + H(+). The protein operates within glycan biosynthesis; trehalose biosynthesis. Probably involved in the osmoprotection via the biosynthesis of trehalose and in the production of glycogen and alpha-glucan via the TreS-Pep2 branch involved in the biosynthesis of maltose-1-phosphate (M1P). Catalyzes the transfer of glucose from UDP-glucose (UDP-Glc) to D-glucose 6-phosphate (Glc-6-P) to form trehalose-6-phosphate. Probably also able to use ADP-Glc, CDP-Glc, GDP-Glc and TDP-Glc as glucosyl donors. The protein is Trehalose-6-phosphate synthase of Mycolicibacterium vanbaalenii (strain DSM 7251 / JCM 13017 / BCRC 16820 / KCTC 9966 / NRRL B-24157 / PYR-1) (Mycobacterium vanbaalenii).